Reading from the N-terminus, the 258-residue chain is Acyl-[acyl-carrier-protein]--UDP-N-acetylglucosamine O-acyltransferase (258 aa).

Belongs to the transferase hexapeptide repeat family. LpxA subfamily. As to quaternary structure, homotrimer.

It is found in the cytoplasm. The enzyme catalyses a (3R)-hydroxyacyl-[ACP] + UDP-N-acetyl-alpha-D-glucosamine = a UDP-3-O-[(3R)-3-hydroxyacyl]-N-acetyl-alpha-D-glucosamine + holo-[ACP]. It participates in glycolipid biosynthesis; lipid IV(A) biosynthesis; lipid IV(A) from (3R)-3-hydroxytetradecanoyl-[acyl-carrier-protein] and UDP-N-acetyl-alpha-D-glucosamine: step 1/6. Involved in the biosynthesis of lipid A, a phosphorylated glycolipid that anchors the lipopolysaccharide to the outer membrane of the cell. In Neisseria meningitidis serogroup B (strain ATCC BAA-335 / MC58), this protein is Acyl-[acyl-carrier-protein]--UDP-N-acetylglucosamine O-acyltransferase.